A 373-amino-acid polypeptide reads, in one-letter code: XK-related protein 9 (373 aa).

The next 8 membrane-spanning stretches (helical) occupy residues 8–28, 38–58, 166–186, 206–226, 230–250, 256–276, 295–315, and 318–338; these read FMMSVLGIIIYVTDLVADIVL, YVLGVLTLSFVLCGTLIVHCF, MVIMVSCCAISWSTVDYQIAL, LFYKLLTLLSWMLSVVLLLFV, VALLLLLFLWITGFIWAFINH, SVSMEFLYRIVVGFILVFTFF, VLGTLGILTVFWIYPLSIFNS, and FIPISATIVLALLLGIIFLGV.

This sequence belongs to the XK family. Post-translationally, undergoes proteolytic processing by caspase-3 (CASP3), caspase-6 (CASP6) and caspase-7 (CASP7) to generate the XK-related protein 9, processed form, leading to its activation. As to expression, highly expressed in the small intestines; weakly expressed in the pancreas, liver, stomach, and large intestines.

It localises to the cell membrane. The catalysed reaction is a 1,2-diacyl-sn-glycero-3-phospho-L-serine(in) = a 1,2-diacyl-sn-glycero-3-phospho-L-serine(out). With respect to regulation, activated upon caspase cleavage to generate the XK-related protein 9, processed form. Does not act prior the onset of apoptosis. In terms of biological role, phospholipid scramblase that promotes phosphatidylserine exposure on apoptotic cell surface. Phosphatidylserine is a specific marker only present at the surface of apoptotic cells and acts as a specific signal for engulfment. In Mus musculus (Mouse), this protein is XK-related protein 9.